The chain runs to 325 residues: Hydroxymethylglutaryl-CoA lyase, mitochondrial (325 aa).

The N-terminal 27 residues, Met-1–Asp-27, are a transit peptide targeting the mitochondrion. Positions Val-33–Leu-300 constitute a Pyruvate carboxyltransferase domain. Arg-41 contacts substrate. An a divalent metal cation-binding site is contributed by Asp-42. Position 48 is an N6-acetyllysine; alternate (Lys-48). Lys-48 carries the post-translational modification N6-succinyllysine; alternate. The residue at position 111 (Lys-111) is an N6-acetyllysine. N6-acetyllysine; alternate is present on residues Lys-137 and Lys-179. N6-succinyllysine; alternate occurs at positions 137 and 179. His-233 and His-235 together coordinate a divalent metal cation. Cys-266 is a catalytic residue. An a divalent metal cation-binding site is contributed by Asn-275. The Microbody targeting signal motif lies at Cys-323–Leu-325. Position 324 is an N6-acetyllysine (Lys-324).

Belongs to the HMG-CoA lyase family. As to quaternary structure, homodimer; disulfide-linked. Can also form homotetramers.

It localises to the mitochondrion matrix. The protein localises to the peroxisome. The catalysed reaction is (3S)-3-hydroxy-3-methylglutaryl-CoA = acetoacetate + acetyl-CoA. It participates in metabolic intermediate metabolism; (S)-3-hydroxy-3-methylglutaryl-CoA degradation; acetoacetate from (S)-3-hydroxy-3-methylglutaryl-CoA: step 1/1. Its function is as follows. Mitochondrial 3-hydroxy-3-methylglutaryl-CoA lyase that catalyzes a cation-dependent cleavage of (S)-3-hydroxy-3-methylglutaryl-CoA into acetyl-CoA and acetoacetate, a key step in ketogenesis. Terminal step in leucine catabolism. Ketone bodies (beta-hydroxybutyrate, acetoacetate and acetone) are essential as an alternative source of energy to glucose, as lipid precursors and as regulators of metabolism. This Macaca fascicularis (Crab-eating macaque) protein is Hydroxymethylglutaryl-CoA lyase, mitochondrial (HMGCL).